A 112-amino-acid chain; its full sequence is UPF0212 protein Mpal_1084 (112 aa).

The protein belongs to the UPF0212 family.

The protein is UPF0212 protein Mpal_1084 of Methanosphaerula palustris (strain ATCC BAA-1556 / DSM 19958 / E1-9c).